Here is a 113-residue protein sequence, read N- to C-terminus: Large ribosomal subunit protein P2 (113 aa).

The segment at 62–113 (LASVPSGGAGGAAASGGAAAAGGSAQAEAAPEAAKEEEKEESDEDMGFGLFD) is disordered. Residues 76 to 93 (SGGAAAAGGSAQAEAAPE) show a composition bias toward low complexity. S103 is modified (phosphoserine).

The protein belongs to the eukaryotic ribosomal protein P1/P2 family. As to quaternary structure, P1 and P2 exist as dimers at the large ribosomal subunit.

Its function is as follows. Plays an important role in the elongation step of protein synthesis. The sequence is that of Large ribosomal subunit protein P2 (ALTA5) from Alternaria alternata (Alternaria rot fungus).